We begin with the raw amino-acid sequence, 603 residues long: Probable lysosomal cobalamin transporter (603 aa).

The next 9 helical transmembrane spans lie at 13–33 (IWVA…ITVF), 50–70 (IVSL…IALV), 99–119 (IVYY…IPFA), 150–170 (IAFI…PTAA), 201–221 (LLMT…LALL), 318–338 (LFGG…MLIT), 353–373 (GYIL…VKAA), 381–401 (ILMA…IASV), and 422–442 (ALLI…YAVV). The N-linked (GlcNAc...) asparagine glycan is linked to Asn-509. A helical transmembrane segment spans residues 512–532 (VFGAIDFWAQFAFLTVFLLVF). N-linked (GlcNAc...) asparagine glycosylation is present at Asn-543. Residues 578 to 603 (AKRTVGGHPNGQGYGTSGTNGTASSR) form a disordered region. A compositionally biased stretch (gly residues) spans 585-595 (HPNGQGYGTSG). Residue Asn-597 is glycosylated (N-linked (GlcNAc...) asparagine).

It belongs to the LIMR family. LMBRD1 subfamily.

Its subcellular location is the lysosome membrane. In terms of biological role, probable lysosomal cobalamin transporter. Required to export cobalamin from lysosomes allowing its conversion to cofactors. In Neurospora crassa (strain ATCC 24698 / 74-OR23-1A / CBS 708.71 / DSM 1257 / FGSC 987), this protein is Probable lysosomal cobalamin transporter.